Reading from the N-terminus, the 530-residue chain is Autoinducer-2 kinase (530 aa).

The protein belongs to the FGGY kinase family.

It localises to the cytoplasm. It carries out the reaction (S)-4,5-dihydroxypentane-2,3-dione + ATP = (2S)-2-hydroxy-3,4-dioxopentyl phosphate + ADP + H(+). In terms of biological role, catalyzes the phosphorylation of autoinducer-2 (AI-2) to phospho-AI-2, which subsequently inactivates the transcriptional regulator LsrR and leads to the transcription of the lsr operon. Phosphorylates the ring-open form of (S)-4,5-dihydroxypentane-2,3-dione (DPD), which is the precursor to all AI-2 signaling molecules, at the C5 position. The sequence is that of Autoinducer-2 kinase from Yersinia pseudotuberculosis serotype O:1b (strain IP 31758).